Consider the following 427-residue polypeptide: Enolase (427 aa).

Residue glutamine 163 coordinates (2R)-2-phosphoglycerate. Catalysis depends on glutamate 205, which acts as the Proton donor. Aspartate 242, glutamate 287, and aspartate 314 together coordinate Mg(2+). (2R)-2-phosphoglycerate-binding residues include lysine 339, arginine 368, serine 369, and lysine 390. Lysine 339 acts as the Proton acceptor in catalysis.

It belongs to the enolase family. Requires Mg(2+) as cofactor.

It localises to the cytoplasm. Its subcellular location is the secreted. The protein localises to the cell surface. The catalysed reaction is (2R)-2-phosphoglycerate = phosphoenolpyruvate + H2O. It participates in carbohydrate degradation; glycolysis; pyruvate from D-glyceraldehyde 3-phosphate: step 4/5. In terms of biological role, catalyzes the reversible conversion of 2-phosphoglycerate (2-PG) into phosphoenolpyruvate (PEP). It is essential for the degradation of carbohydrates via glycolysis. The chain is Enolase from Solibacter usitatus (strain Ellin6076).